A 503-amino-acid chain; its full sequence is Putative (R)-citramalate synthase CimA (503 aa).

The Pyruvate carboxyltransferase domain occupies 9–257 (IRFFDTTLRD…DTGIATEELY (249 aa)).

This sequence belongs to the alpha-IPM synthase/homocitrate synthase family. As to quaternary structure, homodimer.

The catalysed reaction is pyruvate + acetyl-CoA + H2O = (3R)-citramalate + CoA + H(+). It functions in the pathway amino-acid biosynthesis; L-isoleucine biosynthesis; 2-oxobutanoate from pyruvate: step 1/3. Catalyzes the condensation of pyruvate and acetyl-coenzyme A to form (R)-citramalate. This Methanoculleus marisnigri (strain ATCC 35101 / DSM 1498 / JR1) protein is Putative (R)-citramalate synthase CimA.